Reading from the N-terminus, the 376-residue chain is Phytanoyl-CoA hydroxylase interacting protein-like (376 aa).

Phosphoserine occurs at positions 12 and 15. Asn-23 carries an N-linked (GlcNAc...) asparagine glycan. Ser-25 carries the phosphoserine modification. Asn-37 carries N-linked (GlcNAc...) asparagine glycosylation. The Fibronectin type-III domain occupies 52–161; the sequence is VPRNIKISNI…EIIEFCTADY (110 aa).

The protein belongs to the PHYHIP family.

Its function is as follows. May play a role in the development of the central system. The sequence is that of Phytanoyl-CoA hydroxylase interacting protein-like (PHYHIPL) from Bos taurus (Bovine).